The primary structure comprises 360 residues: Phospho-N-acetylmuramoyl-pentapeptide-transferase (360 aa).

Transmembrane regions (helical) follow at residues 25–45 (RGIL…PWMI), 73–93 (TMGG…WADL), 97–117 (YVWV…VDDY), 134–154 (YFWQ…TAPT), 168–188 (VTIP…VGSS), 199–219 (GLAI…CYLS), 236–256 (SGEL…FLWF), 263–283 (VFMG…IAVI), 288–308 (IVLF…VIQV), and 338–358 (VIVR…ATLK).

The protein belongs to the glycosyltransferase 4 family. MraY subfamily. The cofactor is Mg(2+).

Its subcellular location is the cell inner membrane. It carries out the reaction UDP-N-acetyl-alpha-D-muramoyl-L-alanyl-gamma-D-glutamyl-meso-2,6-diaminopimeloyl-D-alanyl-D-alanine + di-trans,octa-cis-undecaprenyl phosphate = di-trans,octa-cis-undecaprenyl diphospho-N-acetyl-alpha-D-muramoyl-L-alanyl-D-glutamyl-meso-2,6-diaminopimeloyl-D-alanyl-D-alanine + UMP. The protein operates within cell wall biogenesis; peptidoglycan biosynthesis. Its function is as follows. Catalyzes the initial step of the lipid cycle reactions in the biosynthesis of the cell wall peptidoglycan: transfers peptidoglycan precursor phospho-MurNAc-pentapeptide from UDP-MurNAc-pentapeptide onto the lipid carrier undecaprenyl phosphate, yielding undecaprenyl-pyrophosphoryl-MurNAc-pentapeptide, known as lipid I. The protein is Phospho-N-acetylmuramoyl-pentapeptide-transferase of Pseudomonas putida (strain ATCC 700007 / DSM 6899 / JCM 31910 / BCRC 17059 / LMG 24140 / F1).